Reading from the N-terminus, the 24-residue chain is Brevinin-1PTa (24 aa).

A disulfide bond links Cys18 and Cys24.

Expressed by the skin glands.

It localises to the secreted. In terms of biological role, has antibacterial activity against the Gram-positive bacterium S.aureus ATCC 25923 (MIC=3 uM) and the Gram-negative bacterium E.coli ATCC 25726 (MIC=24 uM). This chain is Brevinin-1PTa, found in Pulchrana picturata (Malaysian fire frog).